The primary structure comprises 56 residues: UPF0434 protein WIGBR2520 (56 aa).

This sequence belongs to the UPF0434 family.

In Wigglesworthia glossinidia brevipalpis, this protein is UPF0434 protein WIGBR2520.